We begin with the raw amino-acid sequence, 547 residues long: Phosphomethylpyrimidine synthase (547 aa).

Residues 1–15 (MTETLSKTTEPSVTT) are compositionally biased toward polar residues. Residues 1 to 36 (MTETLSKTTEPSVTTGPIPGSSKAYREVANPDGGPS) form a disordered region. Substrate is bound by residues Asn-150, Met-179, Tyr-208, His-244, 264-266 (SRG), 305-308 (DGLR), and Glu-344. His-348 provides a ligand contact to Zn(2+). Tyr-371 serves as a coordination point for substrate. His-412 contributes to the Zn(2+) binding site. Positions 492, 495, and 500 each coordinate [4Fe-4S] cluster.

Belongs to the ThiC family. The cofactor is [4Fe-4S] cluster.

It carries out the reaction 5-amino-1-(5-phospho-beta-D-ribosyl)imidazole + S-adenosyl-L-methionine = 4-amino-2-methyl-5-(phosphooxymethyl)pyrimidine + CO + 5'-deoxyadenosine + formate + L-methionine + 3 H(+). It participates in cofactor biosynthesis; thiamine diphosphate biosynthesis. Its function is as follows. Catalyzes the synthesis of the hydroxymethylpyrimidine phosphate (HMP-P) moiety of thiamine from aminoimidazole ribotide (AIR) in a radical S-adenosyl-L-methionine (SAM)-dependent reaction. The polypeptide is Phosphomethylpyrimidine synthase (Mycobacterium leprae (strain Br4923)).